Here is a 456-residue protein sequence, read N- to C-terminus: Bifunctional protein GlmU (456 aa).

Positions 1 to 229 are pyrophosphorylase; the sequence is MLNNAMSVVI…LSEVEGVNNR (229 aa). UDP-N-acetyl-alpha-D-glucosamine is bound by residues 11 to 14, Lys-25, Gln-76, 81 to 82, 103 to 105, Gly-140, Glu-154, Asn-169, and Asn-227; these read LAAG, GT, and YGD. Asp-105 is a binding site for Mg(2+). A Mg(2+)-binding site is contributed by Asn-227. Residues 230–250 are linker; the sequence is LQLSRLERVYQSEQAEKLLLA. The tract at residues 251–456 is N-acetyltransferase; it reads GVMLRDPARF…EGWRRPVKKK (206 aa). Arg-333 and Lys-351 together coordinate UDP-N-acetyl-alpha-D-glucosamine. His-363 (proton acceptor) is an active-site residue. UDP-N-acetyl-alpha-D-glucosamine contacts are provided by Tyr-366 and Asn-377. Acetyl-CoA-binding positions include Ala-380, 386-387, Ser-405, Ala-423, and Arg-440; that span reads NY.

This sequence in the N-terminal section; belongs to the N-acetylglucosamine-1-phosphate uridyltransferase family. In the C-terminal section; belongs to the transferase hexapeptide repeat family. As to quaternary structure, homotrimer. Mg(2+) serves as cofactor.

It is found in the cytoplasm. It carries out the reaction alpha-D-glucosamine 1-phosphate + acetyl-CoA = N-acetyl-alpha-D-glucosamine 1-phosphate + CoA + H(+). It catalyses the reaction N-acetyl-alpha-D-glucosamine 1-phosphate + UTP + H(+) = UDP-N-acetyl-alpha-D-glucosamine + diphosphate. It functions in the pathway nucleotide-sugar biosynthesis; UDP-N-acetyl-alpha-D-glucosamine biosynthesis; N-acetyl-alpha-D-glucosamine 1-phosphate from alpha-D-glucosamine 6-phosphate (route II): step 2/2. The protein operates within nucleotide-sugar biosynthesis; UDP-N-acetyl-alpha-D-glucosamine biosynthesis; UDP-N-acetyl-alpha-D-glucosamine from N-acetyl-alpha-D-glucosamine 1-phosphate: step 1/1. Its pathway is bacterial outer membrane biogenesis; LPS lipid A biosynthesis. Catalyzes the last two sequential reactions in the de novo biosynthetic pathway for UDP-N-acetylglucosamine (UDP-GlcNAc). The C-terminal domain catalyzes the transfer of acetyl group from acetyl coenzyme A to glucosamine-1-phosphate (GlcN-1-P) to produce N-acetylglucosamine-1-phosphate (GlcNAc-1-P), which is converted into UDP-GlcNAc by the transfer of uridine 5-monophosphate (from uridine 5-triphosphate), a reaction catalyzed by the N-terminal domain. This is Bifunctional protein GlmU from Escherichia coli O127:H6 (strain E2348/69 / EPEC).